The following is a 318-amino-acid chain: Beta-ketoacyl-[acyl-carrier-protein] synthase III (318 aa).

Catalysis depends on residues C112 and H245. The interval 246 to 250 (QANLR) is ACP-binding. N275 is a catalytic residue.

The protein belongs to the thiolase-like superfamily. FabH family. As to quaternary structure, homodimer.

The protein localises to the cytoplasm. It catalyses the reaction malonyl-[ACP] + acetyl-CoA + H(+) = 3-oxobutanoyl-[ACP] + CO2 + CoA. It functions in the pathway lipid metabolism; fatty acid biosynthesis. Catalyzes the condensation reaction of fatty acid synthesis by the addition to an acyl acceptor of two carbons from malonyl-ACP. Catalyzes the first condensation reaction which initiates fatty acid synthesis and may therefore play a role in governing the total rate of fatty acid production. Possesses both acetoacetyl-ACP synthase and acetyl transacylase activities. Its substrate specificity determines the biosynthesis of branched-chain and/or straight-chain of fatty acids. The protein is Beta-ketoacyl-[acyl-carrier-protein] synthase III of Blochmanniella floridana.